We begin with the raw amino-acid sequence, 103 residues long: Phosphoribosyl-ATP pyrophosphatase (103 aa).

It belongs to the PRA-PH family.

The protein resides in the cytoplasm. It carries out the reaction 1-(5-phospho-beta-D-ribosyl)-ATP + H2O = 1-(5-phospho-beta-D-ribosyl)-5'-AMP + diphosphate + H(+). It participates in amino-acid biosynthesis; L-histidine biosynthesis; L-histidine from 5-phospho-alpha-D-ribose 1-diphosphate: step 2/9. The protein is Phosphoribosyl-ATP pyrophosphatase of Listeria monocytogenes serotype 4a (strain HCC23).